Reading from the N-terminus, the 178-residue chain is MKKRGKKPELDWETEEQEEIIWVSKSEIKRDAEELKKLGAKLVDLTKTNLDKIPLDGNLLEAVELARRSVKEAKRRQLQYIGKLLRNTDVEPIRDALDKIENKHNQQQAMLHKLELMRDELVSKGDEGLVALLIDYPQMDRRHLRNLIRSAQKEKEQNKPPKAYREIYQYLKDFIIEE.

The protein belongs to the DarP family.

It is found in the cytoplasm. In terms of biological role, member of a network of 50S ribosomal subunit biogenesis factors which assembles along the 30S-50S interface, preventing incorrect 23S rRNA structures from forming. Promotes peptidyl transferase center (PTC) maturation. The chain is Dual-action ribosomal maturation protein DarP from Mannheimia succiniciproducens (strain KCTC 0769BP / MBEL55E).